The chain runs to 126 residues: Small ribosomal subunit protein uS13c (126 aa).

Residues 97 to 126 are disordered; it reads PLRGQRTRTNARTRRGGKKTVAGKKKAPRK. Residues 101 to 126 are compositionally biased toward basic residues; that stretch reads QRTRTNARTRRGGKKTVAGKKKAPRK.

Belongs to the universal ribosomal protein uS13 family. In terms of assembly, part of the 30S ribosomal subunit.

The protein resides in the plastid. The protein localises to the chloroplast. Located at the top of the head of the 30S subunit, it contacts several helices of the 16S rRNA. In Pyropia yezoensis (Susabi-nori), this protein is Small ribosomal subunit protein uS13c.